We begin with the raw amino-acid sequence, 109 residues long: Fluoride-specific ion channel FluC (109 aa).

Transmembrane regions (helical) follow at residues 21–41 (FFLNNNLLVGVIGSFVYGFVI), 52–72 (ILLTGFCSCFTSFSGFVLFLY), and 83–103 (LFFYLNIIIVLNLIIMYAGFL).

The protein belongs to the fluoride channel Fluc/FEX (TC 1.A.43) family.

It localises to the cell inner membrane. It catalyses the reaction fluoride(in) = fluoride(out). In terms of biological role, fluoride-specific ion channel. Important for reducing fluoride concentration in the cell, thus reducing its toxicity. This is Fluoride-specific ion channel FluC from Prochlorococcus marinus (strain MIT 9515).